The following is a 170-amino-acid chain: Small ribosomal subunit protein mS41 (170 aa).

The transit peptide at 1–20 (MFRTLLSSTVRSIQLKPVTS) directs the protein to the mitochondrion.

It belongs to the mitochondrion-specific ribosomal protein mS41 family. Component of the mitochondrial small ribosomal subunit (mt-SSU).

The protein resides in the mitochondrion. In terms of biological role, component of the mitochondrial ribosome (mitoribosome), a dedicated translation machinery responsible for the synthesis of mitochondrial genome-encoded proteins, including at least some of the essential transmembrane subunits of the mitochondrial respiratory chain. The mitoribosomes are attached to the mitochondrial inner membrane and translation products are cotranslationally integrated into the membrane. mS41 is involved in telomere length regulation. The protein is Small ribosomal subunit protein mS41 (FYV4) of Candida albicans (strain SC5314 / ATCC MYA-2876) (Yeast).